A 214-amino-acid chain; its full sequence is Type 4 apparatus protein DotN (214 aa).

Residues C52, C55, C84, and C87 each coordinate Zn(2+).

The T4BSS is a complex nanomachine composed of several subcomplexes. This subunit is part of the Type IV Coupling Complex (T4CC), a subcomplex composed of the DotLMNYZ core and the IcmSW-LvgA adapter subunits, linked by the C-terminal tail of DotL. Six DotLMNYZ hetero-pentameric units may assemble into a hexameric nanomachine, forming an inner membrane channel for effectors to pass through. Interacts directly with DotL. Interacts with DotZ.

It is found in the cytoplasm. Component of the Dot/Icm type IVB secretion system (T4BSS), which is used to inject bacterial effector proteins into eukaryotic host cells. Part of a subcomplex which recruits effector proteins and delivers them to the core transmembrane subcomplex. This is Type 4 apparatus protein DotN from Legionella pneumophila subsp. pneumophila (strain Philadelphia 1 / ATCC 33152 / DSM 7513).